A 296-amino-acid chain; its full sequence is Acetylglutamate kinase (296 aa).

Substrate contacts are provided by residues 66–67 (GG), arginine 88, and asparagine 191.

The protein belongs to the acetylglutamate kinase family. ArgB subfamily.

It is found in the cytoplasm. The enzyme catalyses N-acetyl-L-glutamate + ATP = N-acetyl-L-glutamyl 5-phosphate + ADP. It participates in amino-acid biosynthesis; L-arginine biosynthesis; N(2)-acetyl-L-ornithine from L-glutamate: step 2/4. Its function is as follows. Catalyzes the ATP-dependent phosphorylation of N-acetyl-L-glutamate. The polypeptide is Acetylglutamate kinase (Lawsonia intracellularis (strain PHE/MN1-00)).